A 91-amino-acid chain; its full sequence is Putative regulatory protein Cyan7425_4125 (91 aa).

Belongs to the RemA family.

This Cyanothece sp. (strain PCC 7425 / ATCC 29141) protein is Putative regulatory protein Cyan7425_4125.